We begin with the raw amino-acid sequence, 160 residues long: AP-1 complex subunit sigma-2 (160 aa).

The protein belongs to the adaptor complexes small subunit family. As to quaternary structure, adaptor protein complex 1 (AP-1) is a heterotetramer composed of two large adaptins (gamma-type subunit AP1G1 and beta-type subunit AP1B1), a medium adaptin (mu-type subunit AP1M1 or AP1M2) and a small adaptin (sigma-type subunit AP1S1 or AP1S2 or AP1S3). Binds to MUC1. Widely expressed.

It is found in the golgi apparatus. Its subcellular location is the cytoplasmic vesicle membrane. It localises to the membrane. The protein localises to the clathrin-coated pit. Its function is as follows. Subunit of clathrin-associated adaptor protein complex 1 that plays a role in protein sorting in the late-Golgi/trans-Golgi network (TGN) and/or endosomes. The AP complexes mediate both the recruitment of clathrin to membranes and the recognition of sorting signals within the cytosolic tails of transmembrane cargo molecules. The protein is AP-1 complex subunit sigma-2 (Ap1s2) of Mus musculus (Mouse).